The sequence spans 386 residues: Putrescine N-methyltransferase 4 (386 aa).

Composition is skewed to polar residues over residues 1–14, 23–48, and 57–87; these read MEVI…STIF, GHQS…GHHN, and HQNG…NGNE. A disordered region spans residues 1–87; sequence MEVISTNTNG…GTISHDNGNE (87 aa). In terms of domain architecture, PABS spans 97–334; it reads LGWFSEFSAL…GVIGYMLCST (238 aa). S-adenosyl-L-methionine-binding positions include glutamine 128, glutamate 203, and 234 to 235; that span reads DG. Aspartate 253 (proton acceptor) is an active-site residue. Tyrosine 322 is an S-adenosyl-L-methionine binding site.

This sequence belongs to the class I-like SAM-binding methyltransferase superfamily. Putrescine methyltransferase family. Predominantly expressed in roots.

The enzyme catalyses putrescine + S-adenosyl-L-methionine = N-methylputrescine + S-adenosyl-L-homocysteine + H(+). It functions in the pathway alkaloid biosynthesis; nicotine biosynthesis. In terms of biological role, involved in the biosynthesis of pyridine alkaloid natural products, leading mainly to the production of anabasine, anatabine, nicotine and nornicotine, effective deterrents against herbivores with antiparasitic and pesticide properties (neurotoxins); nornicotine serves as the precursor in the synthesis of the carcinogen compound N'-nitrosonornicotine (NNN). Methyltransferase that mediates the conversion of putrescine to N-methylputrescine. Promotes leaves ripening. This is Putrescine N-methyltransferase 4 from Nicotiana tabacum (Common tobacco).